A 42-amino-acid polypeptide reads, in one-letter code: Potassium channel gamma toxin gamma-KTx 1.9 (42 aa).

Cystine bridges form between Cys5–Cys23, Cys11–Cys34, Cys20–Cys39, and Cys24–Cys41.

Belongs to the ergtoxin family. Gamma-KTx 1 subfamily. As to expression, expressed by the venom gland.

Its subcellular location is the secreted. Its function is as follows. Blocks human voltage-gated potassium channel Kv11.1/KCNH2/ERG1 (IC(50)=16.9 nM). The protein is Potassium channel gamma toxin gamma-KTx 1.9 of Centruroides tecomanus (Scorpion).